Here is a 210-residue protein sequence, read N- to C-terminus: Dephospho-CoA kinase (210 aa).

In terms of domain architecture, DPCK spans 4-202 (WVGLTGGIGS…AFYSGIFASK (199 aa)). 12 to 17 (GSGKSA) contacts ATP.

This sequence belongs to the CoaE family.

Its subcellular location is the cytoplasm. It catalyses the reaction 3'-dephospho-CoA + ATP = ADP + CoA + H(+). The protein operates within cofactor biosynthesis; coenzyme A biosynthesis; CoA from (R)-pantothenate: step 5/5. Catalyzes the phosphorylation of the 3'-hydroxyl group of dephosphocoenzyme A to form coenzyme A. This chain is Dephospho-CoA kinase, found in Neisseria meningitidis serogroup B (strain ATCC BAA-335 / MC58).